A 526-amino-acid polypeptide reads, in one-letter code: Microphthalmia-associated transcription factor (526 aa).

Position 5 is a phosphoserine; by MTOR (serine 5). Disordered stretches follow at residues 20–54 and 155–179; these read EPKT…STMT and VLSS…SAPN. Residues 34–44 are compositionally biased toward low complexity; it reads SSSSAEHSGAS. Position 180 is a phosphoserine; by MAPK (serine 180). The transactivation stretch occupies residues 224-291; that stretch reads DDVIDDIISL…PANLPNIKRE (68 aa). At serine 280 the chain carries Phosphoserine. A Glycyl lysine isopeptide (Lys-Gly) (interchain with G-Cter in SUMO) cross-link involves residue lysine 289. The region spanning 311-364 is the bHLH domain; that stretch reads QKKDNHNLIERRRRFNINDRIKELGTLIPKSNDPDMRWNKGTILKASVDYIRKL. Positions 355 to 401 form a coiled coil; that stretch reads KASVDYIRKLQREQQRAKDLENRQKKLEHANRHLLLRVQELEMQARA. Residues 374–395 are leucine-zipper; the sequence is LENRQKKLEHANRHLLLRVQEL. The tract at residues 401–431 is DNA-binding regulation; it reads AHGLSLIPSTGLCSPDLVNRIIKQEPVLENC. Serine 405 is modified (phosphoserine; by GSK3). A Phosphoserine modification is found at serine 414. Lysine 423 is covalently cross-linked (Glycyl lysine isopeptide (Lys-Gly) (interchain with G-Cter in SUMO)). At serine 491 the chain carries Phosphoserine. Residues 496–526 are disordered; the sequence is TDPLLSSVSPGASKTSSRRSSMSAEETEHAC. The segment covering 507–519 has biased composition (low complexity); the sequence is ASKTSSRRSSMSA. Phosphoserine; by RPS6KA1 is present on serine 516.

The protein belongs to the MiT/TFE family. As to quaternary structure, homodimer or heterodimer; dimerization is mediated via the coiled coil region. Efficient DNA binding requires dimerization with another bHLH protein. Binds DNA in the form of homodimer or heterodimer with either TFE3, TFEB or TFEC. Interacts with small GTPases Rag (RagA/RRAGA, RagB/RRAGB, RagC/RRAGC and/or RagD/RRAGD); promoting its recruitment to lysosomal membrane in the presence of nutrients. Interacts with KARS1. Identified in a complex with HINT1 and CTNNB1. Interacts with VSX2. In terms of processing, when nutrients are present, phosphorylation by MTOR at Ser-5 via non-canonical mTORC1 pathway promotes ubiquitination by the SCF(BTRC) complex, followed by degradation. Phosphorylation at Ser-405 significantly enhances the ability to bind the tyrosinase promoter. Phosphorylation by MARK3/cTAK1 at Ser-280 promotes association with 14-3-3/YWHA adapters and retention in the cytosol. Phosphorylated at Ser-180 and Ser-516 following KIT signaling, triggering a short live activation: Phosphorylation at Ser-180 and Ser-516 by MAPK and RPS6KA1, respectively, activate the transcription factor activity but also promote ubiquitination and subsequent degradation by the proteasome. Phosphorylated in response to blue light (415nm). Post-translationally, ubiquitinated by the SCF(BTRC) and SCF(FBXW11) complexes following phosphorylation ar Ser-5 by MTOR, leading to its degradation by the proteasome. Ubiquitinated following phosphorylation at Ser-180, leading to subsequent degradation by the proteasome. Deubiquitinated by USP13, preventing its degradation. In the adult, expressed at high levels in the heart, skin, skeletal muscle, intestine, stomach, kidney, ovary, lung, spleen and brain. In the embryo, expressed in developing eye, ear, skin and heart. Isoform M is expressed in melanocytes and also in the embryonic and adult heart while isoform A and isoform H are more widely expressed.

It localises to the nucleus. Its subcellular location is the cytoplasm. The protein localises to the lysosome membrane. Transcription factor that acts as a master regulator of melanocyte survival and differentiation as well as melanosome biogenesis. Binds to M-boxes (5'-TCATGTG-3') and symmetrical DNA sequences (E-boxes) (5'-CACGTG-3') found in the promoter of pigmentation genes, such as tyrosinase (TYR). Involved in the cellular response to amino acid availability by acting downstream of MTOR: in the presence of nutrients, MITF phosphorylation by MTOR promotes its inactivation. Upon starvation or lysosomal stress, inhibition of MTOR induces MITF dephosphorylation, resulting in transcription factor activity. Plays an important role in melanocyte development by regulating the expression of tyrosinase (TYR) and tyrosinase-related protein 1 (TYRP1). Plays a critical role in the differentiation of various cell types, such as neural crest-derived melanocytes, mast cells, osteoclasts and optic cup-derived retinal pigment epithelium. The chain is Microphthalmia-associated transcription factor (Mitf) from Mus musculus (Mouse).